Here is a 111-residue protein sequence, read N- to C-terminus: Small ribosomal subunit protein bS16 (111 aa).

A disordered region spans residues M92–A111.

Belongs to the bacterial ribosomal protein bS16 family.

This Rickettsia massiliae (strain Mtu5) protein is Small ribosomal subunit protein bS16.